The chain runs to 166 residues: Small heat shock protein OV25-2 (166 aa).

The 112-residue stretch at 38–149 (LNECNIGNSL…ASRNIPIRAS (112 aa)) folds into the sHSP domain. The segment at 140–166 (ASRNIPIRASPKEPEANQKSAINDAKQ) is disordered.

This sequence belongs to the small heat shock protein (HSP20) family.

The polypeptide is Small heat shock protein OV25-2 (OV25-2) (Onchocerca volvulus).